The following is a 165-amino-acid chain: Heme oxygenase (165 aa).

It belongs to the heme oxygenase family.

It catalyses the reaction heme b + 3 reduced [NADPH--hemoprotein reductase] + 3 O2 = biliverdin IXalpha + CO + Fe(2+) + 3 oxidized [NADPH--hemoprotein reductase] + 3 H2O + H(+). In terms of biological role, catalyzes the opening of the heme ring to form the open-chain tetrapyrrole biliverdin IX with the release of iron and carbon monoxide (CO). The chain is Heme oxygenase (bphO) from Xanthomonas campestris pv. campestris (strain 8004).